Here is a 269-residue protein sequence, read N- to C-terminus: Thiazole synthase (269 aa).

Residue Lys-109 is the Schiff-base intermediate with DXP of the active site. 1-deoxy-D-xylulose 5-phosphate contacts are provided by residues Gly-170, 196-197 (AG), and 218-219 (NT).

Belongs to the ThiG family. As to quaternary structure, homotetramer. Forms heterodimers with either ThiH or ThiS.

The protein localises to the plastid. The protein resides in the chloroplast. The catalysed reaction is [ThiS sulfur-carrier protein]-C-terminal-Gly-aminoethanethioate + 2-iminoacetate + 1-deoxy-D-xylulose 5-phosphate = [ThiS sulfur-carrier protein]-C-terminal Gly-Gly + 2-[(2R,5Z)-2-carboxy-4-methylthiazol-5(2H)-ylidene]ethyl phosphate + 2 H2O + H(+). The protein operates within cofactor biosynthesis; thiamine diphosphate biosynthesis. Catalyzes the rearrangement of 1-deoxy-D-xylulose 5-phosphate (DXP) to produce the thiazole phosphate moiety of thiamine. Sulfur is provided by the thiocarboxylate moiety of the carrier protein ThiS. In vitro, sulfur can be provided by H(2)S. This Thalassiosira pseudonana (Marine diatom) protein is Thiazole synthase.